A 207-amino-acid chain; its full sequence is Guanylate kinase (207 aa).

The Guanylate kinase-like domain maps to 6 to 185; it reads GLLIVLSGPS…AKNRIQCIVE (180 aa). 13-20 lines the ATP pocket; sequence GPSGVGKG.

This sequence belongs to the guanylate kinase family.

The protein resides in the cytoplasm. It catalyses the reaction GMP + ATP = GDP + ADP. Its function is as follows. Essential for recycling GMP and indirectly, cGMP. This is Guanylate kinase from Staphylococcus aureus (strain bovine RF122 / ET3-1).